Here is a 588-residue protein sequence, read N- to C-terminus: Calicin (588 aa).

In terms of domain architecture, BTB spans tryptophan 28–glutamate 98. The region spanning cysteine 133–phenylalanine 235 is the BACK domain. Residue serine 149 is modified to Phosphoserine. Kelch repeat units follow at residues serine 280–arginine 327, tyrosine 328–glycine 375, valine 377–aspartate 423, asparagine 425–glutamine 475, aspartate 476–serine 525, and lysine 526–leucine 580.

Interacts with CYLC1; the interaction may be relevant for proper acrosome attachment to the nuclear envelope. As to expression, expressed in testis and in spermatozoa.

It is found in the cytoplasm. The protein localises to the cytoskeleton. It localises to the perinuclear theca. The protein resides in the calyx. In terms of biological role, required for both nuclear and acrosomal shaping during spermiogenesis. The sequence is that of Calicin (Ccin) from Mus musculus (Mouse).